A 285-amino-acid polypeptide reads, in one-letter code: Mitochondrial substrate carrier family protein L (285 aa).

Topologically, residues 1–13 (MIASKETKEKIRN) are mitochondrial intermembrane. Solcar repeat units lie at residues 8–94 (KEKI…VKSK), 103–185 (ISLG…AQRY), and 193–282 (MTMG…VMKF). A helical transmembrane segment spans residues 14–34 (FIGGFASGAASTLAGHPFDTL). The Mitochondrial matrix segment spans residues 35–69 (KVRLQTEGSTGRFRGLAHCFTTTIKEEGFFALYKG). Residues 70 to 90 (VTPPLLGMSIINSCMFGAMNI) traverse the membrane as a helical segment. The Mitochondrial intermembrane segment spans residues 91 to 102 (VKSKIHTDKSTP). The helical transmembrane segment at 103–123 (ISLGEIMVSGAITGWIVSFVA) threads the bilayer. Residues 124–156 (CPIETVKSKLQVQYTGVKLYNGPIDCIKKIGIR) are Mitochondrial matrix-facing. The helical transmembrane segment at 157-177 (GLYKALIPTGFQRNSLYAYFG) threads the bilayer. At 178 to 198 (CYELAQRYLRREDGSMTMGRS) the chain is on the mitochondrial intermembrane side. Residues 199 to 219 (FIAGGIAGTGFWLTNFPFDVI) form a helical membrane-spanning segment. Topologically, residues 220 to 256 (RSRIMTMPYNESPPRYKGMIDCAKHIYRVDGLKGFWK) are mitochondrial matrix. A helical membrane pass occupies residues 257 to 277 (GFSPCLLRTFPANGATFVAYE). Over 278 to 285 (CVMKFFPM) the chain is Mitochondrial intermembrane.

Belongs to the mitochondrial carrier (TC 2.A.29) family.

It localises to the mitochondrion inner membrane. Its function is as follows. Mitochondrial solute carriers shuttle metabolites, nucleotides, and cofactors through the mitochondrial inner membrane. This Dictyostelium discoideum (Social amoeba) protein is Mitochondrial substrate carrier family protein L (mcfL).